The chain runs to 1708 residues: Clathrin heavy chain 2 (1708 aa).

The segment at Met1–Tyr492 is globular terminal domain. WD40-like repeat regions lie at residues Phe25–Thr67, Ala68–Gln113, Val114–Ala155, Asn156–Glu205, Ala206–Gln270, Asp271–Asp314, and Pro315–Asn343. Positions Glu462–Asp478 are binding site for the uncoating ATPase, involved in lattice disassembly. Positions Ile493–Arg536 are flexible linker. The segment at Thr537 to Pro648 is distal segment. Positions Thr537–Tyr1708 are heavy chain arm. CHCR repeat units follow at residues Gln551–Val697, Ala700–Phe842, Ile847–Asp986, Leu993–Ala1138, Phe1142–Ala1283, Leu1288–Asn1434, and Leu1437–Phe1580. A proximal segment region spans residues Val653–Tyr1708. Residues Ala1227–Lys1536 form an involved in binding clathrin light chain region. Positions Ser1564 to Tyr1708 are trimerization.

The protein belongs to the clathrin heavy chain family. In terms of assembly, clathrin triskelions, composed of 3 heavy chains and 3 light chains, are the basic subunits of the clathrin coat.

Its subcellular location is the cytoplasmic vesicle membrane. It localises to the membrane. It is found in the coated pit. Functionally, clathrin is the major protein of the polyhedral coat of coated pits and vesicles. In Oryza sativa subsp. japonica (Rice), this protein is Clathrin heavy chain 2.